A 699-amino-acid polypeptide reads, in one-letter code: Endogenous retrovirus group K member 113 Env polyprotein (699 aa).

A disordered region spans residues 1–47; that stretch reads MNPSEMQRKAPPRRRRHRNRAPLTHKMNKMVTSEEQMKLPSTKKAEP. Residues 1 to 89 form the signal peptide; the sequence is MNPSEMQRKA…ALMIVSMVVS (89 aa). The segment covering 10-20 has biased composition (basic residues); the sequence is APPRRRRHRNR. Residues 90–632 lie on the Extracellular side of the membrane; that stretch reads LPMPAGAAAA…NLNPVTWVKT (543 aa). N-linked (GlcNAc...) asparagine glycans are attached at residues Asn100, Asn128, Asn153, Asn274, Asn355, Asn372, and Asn461. Residues 466 to 486 are fusion peptide; the sequence is FIFTLIAVIMGLIAVTATAAV. 4 N-linked (GlcNAc...) asparagine glycosylation sites follow: Asn507, Asn554, Asn566, and Asn585. Residues 633 to 653 form a helical membrane-spanning segment; it reads IGSTTIINLILILVCLFCLLL. The Cytoplasmic segment spans residues 654–699; that stretch reads VCRCTQQLRRDSDHRERAMMTMAVLSKRKGGNVGKSKRDQIVTVSV.

It belongs to the beta type-B retroviral envelope protein family. HERV class-II K(HML-2) env subfamily. In terms of assembly, the surface (SU) and transmembrane (TM) proteins form a heterodimer. SU and TM are attached by noncovalent interactions or by a labile interchain disulfide bond. Specific enzymatic cleavages in vivo yield the mature SU and TM proteins.

It is found in the cell membrane. It localises to the virion. Functionally, retroviral envelope proteins mediate receptor recognition and membrane fusion during early infection. Endogenous envelope proteins may have kept, lost or modified their original function during evolution. This endogenous envelope protein has lost its original fusogenic properties. SU mediates receptor recognition. Its function is as follows. TM anchors the envelope heterodimer to the viral membrane through one transmembrane domain. The other hydrophobic domain, called fusion peptide, mediates fusion of the viral membrane with the target cell membrane. The protein is Endogenous retrovirus group K member 113 Env polyprotein (HERVK_113) of Homo sapiens (Human).